We begin with the raw amino-acid sequence, 122 residues long: NADH-quinone oxidoreductase subunit A (122 aa).

The next 3 helical transmembrane spans lie at 10 to 30, 66 to 86, and 91 to 111; these read MIVG…LTLG, IFAL…PWAV, and LGLF…IGLA.

This sequence belongs to the complex I subunit 3 family. NDH-1 is composed of 14 different subunits. Subunits NuoA, H, J, K, L, M, N constitute the membrane sector of the complex.

It is found in the cell membrane. It carries out the reaction a quinone + NADH + 5 H(+)(in) = a quinol + NAD(+) + 4 H(+)(out). Functionally, NDH-1 shuttles electrons from NADH, via FMN and iron-sulfur (Fe-S) centers, to quinones in the respiratory chain. The immediate electron acceptor for the enzyme in this species is believed to be a menaquinone. Couples the redox reaction to proton translocation (for every two electrons transferred, four hydrogen ions are translocated across the cytoplasmic membrane), and thus conserves the redox energy in a proton gradient. The polypeptide is NADH-quinone oxidoreductase subunit A (Bacillus cytotoxicus (strain DSM 22905 / CIP 110041 / 391-98 / NVH 391-98)).